The chain runs to 578 residues: CTP synthase 2 (578 aa).

Residues 305 to 564 (KIALVGKYTN…VAAASGTLGD (260 aa)) form the Glutamine amidotransferase type-1 domain. Active-site for GATase activity residues include C404, H537, and E539.

It belongs to the CTP synthase family. Homodimer. Oligomerizes to a tetramer in the presence of its substrates UTP and ATP. Requires Mg(2+) as cofactor.

The protein resides in the cytoplasm. The catalysed reaction is UTP + L-glutamine + ATP + H2O = CTP + L-glutamate + ADP + phosphate + 2 H(+). Its pathway is pyrimidine metabolism; CTP biosynthesis via de novo pathway; CTP from UDP: step 2/2. With respect to regulation, activated by GTP. Subject to allosteric product inhibition by CTP. Inhibited by p-chloromercuriphenylsulfonic acid, N-ethylmaleimide and cyclopentenylcytosine (CPEC). In terms of biological role, catalyzes the ATP-dependent amination of UTP to CTP with either L-glutamine or ammonia as the source of nitrogen. Plays an important role in the regulation of phospholipid synthesis. In Saccharomyces cerevisiae (strain YJM789) (Baker's yeast), this protein is CTP synthase 2 (URA8).